The sequence spans 278 residues: Hydroxyethylthiazole kinase (278 aa).

Met48 serves as a coordination point for substrate. 2 residues coordinate ATP: Arg124 and Thr175. Gly202 contacts substrate.

The protein belongs to the Thz kinase family. Mg(2+) is required as a cofactor.

The enzyme catalyses 5-(2-hydroxyethyl)-4-methylthiazole + ATP = 4-methyl-5-(2-phosphooxyethyl)-thiazole + ADP + H(+). It functions in the pathway cofactor biosynthesis; thiamine diphosphate biosynthesis; 4-methyl-5-(2-phosphoethyl)-thiazole from 5-(2-hydroxyethyl)-4-methylthiazole: step 1/1. Its function is as follows. Catalyzes the phosphorylation of the hydroxyl group of 4-methyl-5-beta-hydroxyethylthiazole (THZ). This Clostridium botulinum (strain Alaska E43 / Type E3) protein is Hydroxyethylthiazole kinase.